Consider the following 358-residue polypeptide: Photosystem II protein D1 2 (358 aa).

A run of 3 helical transmembrane segments spans residues 28 to 45 (YVGW…AATI), 117 to 132 (HFLI…QWEL), and 141 to 155 (WICV…AAMA). Chlorophyll a is bound at residue His-117. Residue Tyr-125 coordinates pheophytin a. [CaMn4O5] cluster contacts are provided by Asp-169 and Glu-188. The helical transmembrane segment at 196-217 (FHMLGVAGVFGGSLFSAMHGSL) threads the bilayer. His-197 lines the chlorophyll a pocket. Residues His-214 and 263 to 264 (SF) each bind a quinone. His-214 contacts Fe cation. Residue His-271 participates in Fe cation binding. A helical membrane pass occupies residues 273 to 287 (FLGAWPVVGIWFTSM). Positions 331, 332, 341, and 343 each coordinate [CaMn4O5] cluster. The propeptide occupies 344–358 (TVESTPVALQAPAIG).

The protein belongs to the reaction center PufL/M/PsbA/D family. PSII is composed of 1 copy each of membrane proteins PsbA, PsbB, PsbC, PsbD, PsbE, PsbF, PsbH, PsbI, PsbJ, PsbK, PsbL, PsbM, PsbT, PsbX, PsbY, PsbZ, Psb30/Ycf12, peripheral proteins PsbO, CyanoQ (PsbQ), PsbU, PsbV and a large number of cofactors. It forms dimeric complexes. The cofactor is The D1/D2 heterodimer binds P680, chlorophylls that are the primary electron donor of PSII, and subsequent electron acceptors. It shares a non-heme iron and each subunit binds pheophytin, quinone, additional chlorophylls, carotenoids and lipids. D1 provides most of the ligands for the Mn4-Ca-O5 cluster of the oxygen-evolving complex (OEC). There is also a Cl(-1) ion associated with D1 and D2, which is required for oxygen evolution. The PSII complex binds additional chlorophylls, carotenoids and specific lipids.. In terms of processing, tyr-160 forms a radical intermediate that is referred to as redox-active TyrZ, YZ or Y-Z. C-terminally processed by CtpA; processing is essential to allow assembly of the oxygen-evolving complex and thus photosynthetic growth.

It localises to the cellular thylakoid membrane. The catalysed reaction is 2 a plastoquinone + 4 hnu + 2 H2O = 2 a plastoquinol + O2. In terms of biological role, photosystem II (PSII) is a light-driven water:plastoquinone oxidoreductase that uses light energy to abstract electrons from H(2)O, generating O(2) and a proton gradient subsequently used for ATP formation. It consists of a core antenna complex that captures photons, and an electron transfer chain that converts photonic excitation into a charge separation. The D1/D2 (PsbA/PsbD) reaction center heterodimer binds P680, the primary electron donor of PSII as well as several subsequent electron acceptors. In Parasynechococcus marenigrum (strain WH8102), this protein is Photosystem II protein D1 2.